Consider the following 173-residue polypeptide: Ribosome maturation factor RimM (173 aa).

Positions 78-157 (EEEFYLADLI…VLVVPPEEVE (80 aa)) constitute a PRC barrel domain. Residues 152–173 (PPEEVEAQEPPEKDAGGDEPSP) are disordered.

The protein belongs to the RimM family. As to quaternary structure, binds ribosomal protein uS19.

Its subcellular location is the cytoplasm. Functionally, an accessory protein needed during the final step in the assembly of 30S ribosomal subunit, possibly for assembly of the head region. Essential for efficient processing of 16S rRNA. May be needed both before and after RbfA during the maturation of 16S rRNA. It has affinity for free ribosomal 30S subunits but not for 70S ribosomes. The polypeptide is Ribosome maturation factor RimM (Beijerinckia indica subsp. indica (strain ATCC 9039 / DSM 1715 / NCIMB 8712)).